The chain runs to 388 residues: Glucose-6-phosphate/phosphate translocator 1, chloroplastic (388 aa).

A chloroplast-targeting transit peptide spans 1 to 65 (MVLSVKQTLS…LRAKSPVVRC (65 aa)). 8 helical membrane passes run 95-115 (LKIGIYFATWWALNVVFNIYN), 129-149 (STLSLAAGSLMMLISWAVGIV), 158-178 (FWKTLFPVAVAHTIGHVAATV), 211-231 (FPTSVYLSLIPIIGGCALSAL), 233-253 (ELNFNMIGFMGAMISNLAFVF), 273-293 (YACLSMLSLLILTPFAIAVEG), 305-325 (LATVGPQFVWWVVAQSVFYHL), and 363-383 (TPVQPVNALGAAIAILGTFLY). The EamA domain occupies 112–229 (NIYNKKVLNA…IPIIGGCALS (118 aa)).

This sequence belongs to the TPT transporter family. GPT (TC 2.A.7.9) subfamily. As to expression, expressed in seeds, flowers, rosette leaves, and roots, with highest levels found in stamens. Found in the root cap, in guard cells and in mesophyll cells.

It localises to the plastid. Its subcellular location is the chloroplast membrane. The protein resides in the endoplasmic reticulum membrane. It is found in the peroxisome membrane. Glucose 6-phosphate (Glc6P) transporter. Also transports inorganic phosphate, 3-phosphoglycerate, triose phosphates and, to a leser extent, phosphoenolpyruvate. Responsible for the transport of Glc6P into plastids of heterotrophic tissues where it can be used as a carbon source for starch biosynthesis, as substrate for fatty acid biosynthesis or as substrate for NADPH generation via the oxidative pentose phosphate pathway (OPPP). Required for pollen maturation and embryo sac development. Preferentially exchanges Glc6P for ribulose-5-phosphate (Ru5P) in reconstituted yeast proteoliposomes. May supply the substrate (Glc6P) for OPPP reactions inside peroxisomes and exchange it with the product Ru5P which leaves the organelle. This chain is Glucose-6-phosphate/phosphate translocator 1, chloroplastic, found in Arabidopsis thaliana (Mouse-ear cress).